Consider the following 366-residue polypeptide: Mannonate dehydratase (366 aa).

It belongs to the mannonate dehydratase family. Fe(2+) serves as cofactor. Mn(2+) is required as a cofactor.

It catalyses the reaction D-mannonate = 2-dehydro-3-deoxy-D-gluconate + H2O. The protein operates within carbohydrate metabolism; pentose and glucuronate interconversion. In terms of biological role, catalyzes the dehydration of D-mannonate. In Streptococcus suis (strain 98HAH33), this protein is Mannonate dehydratase.